The primary structure comprises 148 residues: Large ribosomal subunit protein bL9 (148 aa).

This sequence belongs to the bacterial ribosomal protein bL9 family.

Functionally, binds to the 23S rRNA. In Clostridium perfringens (strain ATCC 13124 / DSM 756 / JCM 1290 / NCIMB 6125 / NCTC 8237 / Type A), this protein is Large ribosomal subunit protein bL9.